The chain runs to 169 residues: Crossover junction endodeoxyribonuclease RuvC (169 aa).

Catalysis depends on residues Asp15, Glu75, and Asp147. Asp15, Glu75, and Asp147 together coordinate Mg(2+).

It belongs to the RuvC family. In terms of assembly, homodimer which binds Holliday junction (HJ) DNA. The HJ becomes 2-fold symmetrical on binding to RuvC with unstacked arms; it has a different conformation from HJ DNA in complex with RuvA. In the full resolvosome a probable DNA-RuvA(4)-RuvB(12)-RuvC(2) complex forms which resolves the HJ. Requires Mg(2+) as cofactor.

The protein localises to the cytoplasm. It carries out the reaction Endonucleolytic cleavage at a junction such as a reciprocal single-stranded crossover between two homologous DNA duplexes (Holliday junction).. Its function is as follows. The RuvA-RuvB-RuvC complex processes Holliday junction (HJ) DNA during genetic recombination and DNA repair. Endonuclease that resolves HJ intermediates. Cleaves cruciform DNA by making single-stranded nicks across the HJ at symmetrical positions within the homologous arms, yielding a 5'-phosphate and a 3'-hydroxyl group; requires a central core of homology in the junction. The consensus cleavage sequence is 5'-(A/T)TT(C/G)-3'. Cleavage occurs on the 3'-side of the TT dinucleotide at the point of strand exchange. HJ branch migration catalyzed by RuvA-RuvB allows RuvC to scan DNA until it finds its consensus sequence, where it cleaves and resolves the cruciform DNA. The polypeptide is Crossover junction endodeoxyribonuclease RuvC (Caulobacter vibrioides (strain ATCC 19089 / CIP 103742 / CB 15) (Caulobacter crescentus)).